Consider the following 376-residue polypeptide: Putative phosphoserine aminotransferase (376 aa).

R50 is an L-glutamate binding site. Pyridoxal 5'-phosphate-binding positions include 84–85 (AT), F108, T154, D176, and Q199. N6-(pyridoxal phosphate)lysine is present on K200. 251–252 (NT) contributes to the pyridoxal 5'-phosphate binding site.

The protein belongs to the class-V pyridoxal-phosphate-dependent aminotransferase family. SerC subfamily. As to quaternary structure, homodimer. Requires pyridoxal 5'-phosphate as cofactor.

It is found in the cytoplasm. The enzyme catalyses O-phospho-L-serine + 2-oxoglutarate = 3-phosphooxypyruvate + L-glutamate. It catalyses the reaction 4-(phosphooxy)-L-threonine + 2-oxoglutarate = (R)-3-hydroxy-2-oxo-4-phosphooxybutanoate + L-glutamate. Its pathway is amino-acid biosynthesis; L-serine biosynthesis; L-serine from 3-phospho-D-glycerate: step 2/3. It participates in cofactor biosynthesis; pyridoxine 5'-phosphate biosynthesis; pyridoxine 5'-phosphate from D-erythrose 4-phosphate: step 3/5. In terms of biological role, catalyzes the reversible conversion of 3-phosphohydroxypyruvate to phosphoserine and of 3-hydroxy-2-oxo-4-phosphonooxybutanoate to phosphohydroxythreonine. The sequence is that of Putative phosphoserine aminotransferase from Mycobacterium bovis (strain ATCC BAA-935 / AF2122/97).